Here is a 303-residue protein sequence, read N- to C-terminus: Foldase protein PrsA (303 aa).

The N-terminal stretch at methionine 1 to glycine 20 is a signal peptide. Residue cysteine 21 is the site of N-palmitoyl cysteine attachment. Cysteine 21 carries the S-diacylglycerol cysteine lipid modification. The 97-residue stretch at glutamate 137–lysine 233 folds into the PpiC domain.

This sequence belongs to the PrsA family.

It localises to the cell membrane. It carries out the reaction [protein]-peptidylproline (omega=180) = [protein]-peptidylproline (omega=0). In terms of biological role, plays a major role in protein secretion by helping the post-translocational extracellular folding of several secreted proteins. This is Foldase protein PrsA from Latilactobacillus sakei subsp. sakei (strain 23K) (Lactobacillus sakei subsp. sakei).